The sequence spans 151 residues: Flagellar assembly factor FliW (151 aa).

The protein belongs to the FliW family. Interacts with translational regulator CsrA and flagellin(s).

It is found in the cytoplasm. Acts as an anti-CsrA protein, binds CsrA and prevents it from repressing translation of its target genes, one of which is flagellin. Binds to flagellin and participates in the assembly of the flagellum. The protein is Flagellar assembly factor FliW of Lachnospira eligens (strain ATCC 27750 / DSM 3376 / VPI C15-48 / C15-B4) (Eubacterium eligens).